Reading from the N-terminus, the 351-residue chain is Divinyl chlorophyll a/b light-harvesting protein PcbC (351 aa).

The next 6 helical transmembrane spans lie at 27-47 (FIAA…AFTL), 64-84 (LICL…GVIT), 89-109 (CTVI…GGLL), 203-223 (VMGG…FHIA), 244-264 (VLSY…FWCA), and 306-326 (LSNV…WHAL).

This sequence belongs to the PsbB/PsbC family. IsiA/Pcb subfamily. The antenna complex consists of divinyl chlorophylls (a and b) and divinyl chlorophyll a/b binding proteins and binds more divinyl chlorophyll b than does the antenna complex from high-light-adapted Prochlorococcus. Divinyl chlorophyll a serves as cofactor. Divinyl chlorophyll b is required as a cofactor.

The protein localises to the cellular thylakoid membrane. In terms of biological role, the antenna complex functions as a light receptor, it captures and delivers excitation energy to photosystems II and I. The Prochlorales pcb genes are not related to higher plant LHCs. The chain is Divinyl chlorophyll a/b light-harvesting protein PcbC (pcbC) from Prochlorococcus marinus (strain SARG / CCMP1375 / SS120).